The chain runs to 417 residues: Gamma-glutamyl phosphate reductase (417 aa).

This sequence belongs to the gamma-glutamyl phosphate reductase family.

Its subcellular location is the cytoplasm. The enzyme catalyses L-glutamate 5-semialdehyde + phosphate + NADP(+) = L-glutamyl 5-phosphate + NADPH + H(+). The protein operates within amino-acid biosynthesis; L-proline biosynthesis; L-glutamate 5-semialdehyde from L-glutamate: step 2/2. In terms of biological role, catalyzes the NADPH-dependent reduction of L-glutamate 5-phosphate into L-glutamate 5-semialdehyde and phosphate. The product spontaneously undergoes cyclization to form 1-pyrroline-5-carboxylate. The protein is Gamma-glutamyl phosphate reductase of Legionella pneumophila (strain Lens).